Reading from the N-terminus, the 255-residue chain is Type III pantothenate kinase (255 aa).

6–13 provides a ligand contact to ATP; it reads DIGNTNIK. 107-110 provides a ligand contact to substrate; sequence GADR. Asp-109 functions as the Proton acceptor in the catalytic mechanism. Position 132 (Thr-132) interacts with ATP. Residue Thr-184 participates in substrate binding.

It belongs to the type III pantothenate kinase family. Homodimer. It depends on NH4(+) as a cofactor. K(+) is required as a cofactor.

It localises to the cytoplasm. The catalysed reaction is (R)-pantothenate + ATP = (R)-4'-phosphopantothenate + ADP + H(+). It participates in cofactor biosynthesis; coenzyme A biosynthesis; CoA from (R)-pantothenate: step 1/5. In terms of biological role, catalyzes the phosphorylation of pantothenate (Pan), the first step in CoA biosynthesis. This is Type III pantothenate kinase from Roseiflexus sp. (strain RS-1).